Here is a 252-residue protein sequence, read N- to C-terminus: dITP/XTP pyrophosphatase (252 aa).

Thr7–Lys12 serves as a coordination point for substrate. Asp74 (proton acceptor) is an active-site residue. A Mg(2+)-binding site is contributed by Asp74. Substrate-binding positions include Ser75 and Phe193–Asp196. Residues Asp202–Glu229 form a disordered region. Residues Lys230 and His235–Arg236 contribute to the substrate site.

This sequence belongs to the HAM1 NTPase family. In terms of assembly, homodimer. The cofactor is Mg(2+).

It carries out the reaction XTP + H2O = XMP + diphosphate + H(+). The catalysed reaction is dITP + H2O = dIMP + diphosphate + H(+). It catalyses the reaction ITP + H2O = IMP + diphosphate + H(+). Functionally, pyrophosphatase that catalyzes the hydrolysis of nucleoside triphosphates to their monophosphate derivatives, with a high preference for the non-canonical purine nucleotides XTP (xanthosine triphosphate), dITP (deoxyinosine triphosphate) and ITP. Seems to function as a house-cleaning enzyme that removes non-canonical purine nucleotides from the nucleotide pool, thus preventing their incorporation into DNA/RNA and avoiding chromosomal lesions. The chain is dITP/XTP pyrophosphatase from Bifidobacterium longum (strain NCC 2705).